The sequence spans 201 residues: 3-isopropylmalate dehydratase small subunit (201 aa).

The protein belongs to the LeuD family. LeuD type 1 subfamily. In terms of assembly, heterodimer of LeuC and LeuD.

It catalyses the reaction (2R,3S)-3-isopropylmalate = (2S)-2-isopropylmalate. It participates in amino-acid biosynthesis; L-leucine biosynthesis; L-leucine from 3-methyl-2-oxobutanoate: step 2/4. In terms of biological role, catalyzes the isomerization between 2-isopropylmalate and 3-isopropylmalate, via the formation of 2-isopropylmaleate. In Pasteurella multocida (strain Pm70), this protein is 3-isopropylmalate dehydratase small subunit.